Here is a 71-residue protein sequence, read N- to C-terminus: Protein cef (71 aa).

In terms of biological role, plays a role in the processing of a cluster of viral tRNAs. The protein is Protein cef (cef) of Escherichia coli (Bacteriophage T4).